The primary structure comprises 382 residues: S-adenosylmethionine synthase (382 aa).

His-15 is a binding site for ATP. Asp-17 provides a ligand contact to Mg(2+). Glu-43 contacts K(+). Glu-56 and Gln-99 together coordinate L-methionine. Residues 99–109 (QSGDIAQGVDR) are flexible loop. ATP contacts are provided by residues 164 to 166 (DAK), 230 to 231 (KF), Asp-239, 245 to 246 (RK), Ala-262, and Lys-266. Residue Asp-239 coordinates L-methionine. L-methionine is bound at residue Lys-270.

This sequence belongs to the AdoMet synthase family. As to quaternary structure, homotetramer; dimer of dimers. The cofactor is Mg(2+). Requires K(+) as cofactor.

The protein localises to the cytoplasm. It carries out the reaction L-methionine + ATP + H2O = S-adenosyl-L-methionine + phosphate + diphosphate. The protein operates within amino-acid biosynthesis; S-adenosyl-L-methionine biosynthesis; S-adenosyl-L-methionine from L-methionine: step 1/1. Functionally, catalyzes the formation of S-adenosylmethionine (AdoMet) from methionine and ATP. The overall synthetic reaction is composed of two sequential steps, AdoMet formation and the subsequent tripolyphosphate hydrolysis which occurs prior to release of AdoMet from the enzyme. This is S-adenosylmethionine synthase from Dichelobacter nodosus (strain VCS1703A).